Reading from the N-terminus, the 315-residue chain is Putative purine nucleoside phosphorylase (315 aa).

Residues Ser-49, His-81, 103-105 (RYH), and Ala-135 each bind phosphate. A purine D-ribonucleoside is bound at residue Glu-220. Ser-239 provides a ligand contact to phosphate. Asn-262 serves as a coordination point for a purine D-ribonucleoside.

This sequence belongs to the PNP/MTAP phosphorylase family.

It localises to the cytoplasm. It is found in the nucleus. It catalyses the reaction a purine D-ribonucleoside + phosphate = a purine nucleobase + alpha-D-ribose 1-phosphate. The protein operates within purine metabolism; purine nucleoside salvage. Functionally, the purine nucleoside phosphorylases catalyze the phosphorolytic breakdown of the N-glycosidic bond in the beta-(deoxy)ribonucleoside molecules, with the formation of the corresponding free purine bases and pentose-1-phosphate. Cleaves guanosine and inosine. This Schizosaccharomyces pombe (strain 972 / ATCC 24843) (Fission yeast) protein is Putative purine nucleoside phosphorylase.